Here is a 161-residue protein sequence, read N- to C-terminus: Ecotin (161 aa).

Residues 1-23 (MGNFTVRATAGLMLASLSTLAHA) form the signal peptide. Cys-69 and Cys-106 form a disulfide bridge.

The protein belongs to the protease inhibitor I11 (ecotin) family. Homodimer.

Its subcellular location is the periplasm. Its function is as follows. General inhibitor of family S1 serine proteases. The chain is Ecotin from Pseudomonas fluorescens (strain Pf0-1).